The sequence spans 537 residues: Glutamate--tRNA ligase (537 aa).

The 'HIGH' region signature appears at 9-19 (PSPTGLQHIGG). Residues C125, C127, C152, and E154 each contribute to the Zn(2+) site. The 'KMSKS' region motif lies at 270-274 (KLSKR). Position 273 (K273) interacts with ATP.

The protein belongs to the class-I aminoacyl-tRNA synthetase family. Glutamate--tRNA ligase type 1 subfamily. Monomer. Requires Zn(2+) as cofactor.

The protein localises to the cytoplasm. The catalysed reaction is tRNA(Glu) + L-glutamate + ATP = L-glutamyl-tRNA(Glu) + AMP + diphosphate. Functionally, catalyzes the attachment of glutamate to tRNA(Glu) in a two-step reaction: glutamate is first activated by ATP to form Glu-AMP and then transferred to the acceptor end of tRNA(Glu). The polypeptide is Glutamate--tRNA ligase (Treponema pallidum (strain Nichols)).